Consider the following 133-residue polypeptide: Small ribosomal subunit protein uS8 (133 aa).

This sequence belongs to the universal ribosomal protein uS8 family. In terms of assembly, part of the 30S ribosomal subunit. Contacts proteins S5 and S12.

Functionally, one of the primary rRNA binding proteins, it binds directly to 16S rRNA central domain where it helps coordinate assembly of the platform of the 30S subunit. In Mycoplasma mobile (strain ATCC 43663 / 163K / NCTC 11711) (Mesomycoplasma mobile), this protein is Small ribosomal subunit protein uS8.